Here is a 492-residue protein sequence, read N- to C-terminus: MIRPNMFALLMLVVLAITSVNADCPKVKRDVCVIGGGAAGMSIATLLKDRGYDPVVLERESVVGGHCNTQYFDPPEGETVDWIDYGVQLFMNTTQLNLTGVGSWSLATDKFAERFIGPNATLPLEGNDINLYVNMETGELVIPNVNETALNNALGVYFYLLSMYPWTSDGKYTGTIPPELLQSFGDFASPFGLNAMAEIFRAFGYNSGIAYGNYTNLPALYMLNAASMSVMQVLLGPSTTTFKVKGGCYSVYRGMSDYLGSENIVLNATVTELTRSFFLSTKSPRLRGYTTRADGSTDNFEYECEKVVVAHPPTLDDLSYVDLTQNEQDLFSNVEVAYYYAGVADISSSYLNGNSFQVMNADPSSEYNVPFGPGLISLGRYVDYGPTQIQAISNTNLEVCDMLEIITRDFENIPSWILNSFDIKTFDQHKEYAPHFNLASLSNPVSPYAKLAELQGSNNTYWVSALNRYTAATAHVWDEANIIVNTYFPSKN.

A signal peptide spans 1–22 (MIRPNMFALLMLVVLAITSVNA). N-linked (GlcNAc...) asparagine; by host glycans are attached at residues N92, N97, N119, N146, N213, N267, and N458.

The protein localises to the secreted. This is an uncharacterized protein from Acanthamoeba polyphaga (Amoeba).